We begin with the raw amino-acid sequence, 149 residues long: Urease accessory protein UreE (149 aa).

The protein belongs to the UreE family.

It localises to the cytoplasm. Involved in urease metallocenter assembly. Binds nickel. Probably functions as a nickel donor during metallocenter assembly. The polypeptide is Urease accessory protein UreE (Corynebacterium efficiens (strain DSM 44549 / YS-314 / AJ 12310 / JCM 11189 / NBRC 100395)).